The primary structure comprises 968 residues: RNA polymerase-associated protein RapA (968 aa).

Positions 163–332 constitute a Helicase ATP-binding domain; the sequence is EVGRRYAPRV…FARLRLLDPD (170 aa). 176–183 serves as a coordination point for ATP; it reads DEVGLGKT. Residues 278–281 carry the DEAH box motif; that stretch reads DEAH. One can recognise a Helicase C-terminal domain in the interval 491–655; that stretch reads RVDWLIEFLK…EFAEDLLNVL (165 aa).

This sequence belongs to the SNF2/RAD54 helicase family. RapA subfamily. In terms of assembly, interacts with the RNAP. Has a higher affinity for the core RNAP than for the holoenzyme. Its ATPase activity is stimulated by binding to RNAP.

In terms of biological role, transcription regulator that activates transcription by stimulating RNA polymerase (RNAP) recycling in case of stress conditions such as supercoiled DNA or high salt concentrations. Probably acts by releasing the RNAP, when it is trapped or immobilized on tightly supercoiled DNA. Does not activate transcription on linear DNA. Probably not involved in DNA repair. The sequence is that of RNA polymerase-associated protein RapA from Shewanella sp. (strain ANA-3).